A 214-amino-acid chain; its full sequence is Thiamine-phosphate synthase (214 aa).

4-amino-2-methyl-5-(diphosphooxymethyl)pyrimidine contacts are provided by residues 37 to 41 (QYREK) and N73. Mg(2+) is bound by residues D74 and D93. S112 serves as a coordination point for 4-amino-2-methyl-5-(diphosphooxymethyl)pyrimidine. 139–141 (TIS) is a 2-[(2R,5Z)-2-carboxy-4-methylthiazol-5(2H)-ylidene]ethyl phosphate binding site. K142 serves as a coordination point for 4-amino-2-methyl-5-(diphosphooxymethyl)pyrimidine. 2-[(2R,5Z)-2-carboxy-4-methylthiazol-5(2H)-ylidene]ethyl phosphate is bound by residues G171 and 191-192 (IS).

It belongs to the thiamine-phosphate synthase family. Mg(2+) is required as a cofactor.

The catalysed reaction is 2-[(2R,5Z)-2-carboxy-4-methylthiazol-5(2H)-ylidene]ethyl phosphate + 4-amino-2-methyl-5-(diphosphooxymethyl)pyrimidine + 2 H(+) = thiamine phosphate + CO2 + diphosphate. The enzyme catalyses 2-(2-carboxy-4-methylthiazol-5-yl)ethyl phosphate + 4-amino-2-methyl-5-(diphosphooxymethyl)pyrimidine + 2 H(+) = thiamine phosphate + CO2 + diphosphate. It carries out the reaction 4-methyl-5-(2-phosphooxyethyl)-thiazole + 4-amino-2-methyl-5-(diphosphooxymethyl)pyrimidine + H(+) = thiamine phosphate + diphosphate. It functions in the pathway cofactor biosynthesis; thiamine diphosphate biosynthesis; thiamine phosphate from 4-amino-2-methyl-5-diphosphomethylpyrimidine and 4-methyl-5-(2-phosphoethyl)-thiazole: step 1/1. Condenses 4-methyl-5-(beta-hydroxyethyl)thiazole monophosphate (THZ-P) and 2-methyl-4-amino-5-hydroxymethyl pyrimidine pyrophosphate (HMP-PP) to form thiamine monophosphate (TMP). The polypeptide is Thiamine-phosphate synthase (Listeria monocytogenes serovar 1/2a (strain ATCC BAA-679 / EGD-e)).